The primary structure comprises 225 residues: Leucyl/phenylalanyl-tRNA--protein transferase (225 aa).

This sequence belongs to the L/F-transferase family.

Its subcellular location is the cytoplasm. The catalysed reaction is N-terminal L-lysyl-[protein] + L-leucyl-tRNA(Leu) = N-terminal L-leucyl-L-lysyl-[protein] + tRNA(Leu) + H(+). It carries out the reaction N-terminal L-arginyl-[protein] + L-leucyl-tRNA(Leu) = N-terminal L-leucyl-L-arginyl-[protein] + tRNA(Leu) + H(+). The enzyme catalyses L-phenylalanyl-tRNA(Phe) + an N-terminal L-alpha-aminoacyl-[protein] = an N-terminal L-phenylalanyl-L-alpha-aminoacyl-[protein] + tRNA(Phe). Functionally, functions in the N-end rule pathway of protein degradation where it conjugates Leu, Phe and, less efficiently, Met from aminoacyl-tRNAs to the N-termini of proteins containing an N-terminal arginine or lysine. This Rhodopseudomonas palustris (strain TIE-1) protein is Leucyl/phenylalanyl-tRNA--protein transferase.